A 53-amino-acid chain; its full sequence is U1-poneritoxin-Dq5a (53 aa).

The N-terminal stretch at 1 to 23 (MNIRLMFTLIALLVLTVSFSGAN) is a signal peptide. 3 disulfides stabilise this stretch: C25-C42, C32-C47, and C41-C52.

As to expression, expressed by the venom gland.

The protein resides in the secreted. Its function is as follows. May have neurotoxic activity. The chain is U1-poneritoxin-Dq5a from Dinoponera quadriceps (South American ant).